Reading from the N-terminus, the 180-residue chain is Acireductone dioxygenase (180 aa).

Fe(2+)-binding residues include His-97, His-99, Glu-103, and His-141. The Ni(2+) site is built by His-97, His-99, Glu-103, and His-141.

This sequence belongs to the acireductone dioxygenase (ARD) family. As to quaternary structure, monomer. The cofactor is Fe(2+). Ni(2+) serves as cofactor.

The catalysed reaction is 1,2-dihydroxy-5-(methylsulfanyl)pent-1-en-3-one + O2 = 3-(methylsulfanyl)propanoate + CO + formate + 2 H(+). It carries out the reaction 1,2-dihydroxy-5-(methylsulfanyl)pent-1-en-3-one + O2 = 4-methylsulfanyl-2-oxobutanoate + formate + 2 H(+). It participates in amino-acid biosynthesis; L-methionine biosynthesis via salvage pathway; L-methionine from S-methyl-5-thio-alpha-D-ribose 1-phosphate: step 5/6. Its function is as follows. Catalyzes 2 different reactions between oxygen and the acireductone 1,2-dihydroxy-3-keto-5-methylthiopentene (DHK-MTPene) depending upon the metal bound in the active site. Fe-containing acireductone dioxygenase (Fe-ARD) produces formate and 2-keto-4-methylthiobutyrate (KMTB), the alpha-ketoacid precursor of methionine in the methionine recycle pathway. Ni-containing acireductone dioxygenase (Ni-ARD) produces methylthiopropionate, carbon monoxide and formate, and does not lie on the methionine recycle pathway. The polypeptide is Acireductone dioxygenase (Cronobacter sakazakii (Enterobacter sakazakii)).